The following is a 228-amino-acid chain: Putative adhesin A1I_01215 (228 aa).

The signal sequence occupies residues M1–A22.

This chain is Putative adhesin A1I_01215, found in Rickettsia bellii (strain OSU 85-389).